A 515-amino-acid polypeptide reads, in one-letter code: Glucose-6-phosphate 1-dehydrogenase 6, cytoplasmic (515 aa).

NADP(+) is bound by residues 38–45, Arg73, Tyr155, and Lys182; that span reads GASGDLAK. Residues Lys182, 212 to 216, Glu250, and Asp269 each bind D-glucose 6-phosphate; that span reads HYLGK. His274 (proton acceptor) is an active-site residue. Lys357 is an NADP(+) binding site. D-glucose 6-phosphate contacts are provided by Lys360 and Arg365. The NADP(+) site is built by Lys366, Arg370, and Arg394. Gln396 is a D-glucose 6-phosphate binding site. NADP(+) contacts are provided by residues 402–404, 422–424, Arg488, and Trp510; these read YMK and DLS.

This sequence belongs to the glucose-6-phosphate dehydrogenase family. As to quaternary structure, forms homodimer. As to expression, expressed in roots, leaves, stems, buds, flowers and siliques.

Its subcellular location is the cytoplasm. The protein resides in the cytosol. It catalyses the reaction D-glucose 6-phosphate + NADP(+) = 6-phospho-D-glucono-1,5-lactone + NADPH + H(+). The protein operates within carbohydrate degradation; pentose phosphate pathway; D-ribulose 5-phosphate from D-glucose 6-phosphate (oxidative stage): step 1/3. Its activity is regulated as follows. Regulated by metabolites. In terms of biological role, catalyzes the rate-limiting step of the oxidative pentose-phosphate pathway, which represents a route for the dissimilation of carbohydrates besides glycolysis. The main function of this enzyme is to provide reducing power (NADPH) and pentose phosphates for fatty acid and nucleic acid synthesis which are involved in membrane synthesis and cell division. The protein is Glucose-6-phosphate 1-dehydrogenase 6, cytoplasmic of Arabidopsis thaliana (Mouse-ear cress).